We begin with the raw amino-acid sequence, 417 residues long: MSSKYPRSVRCCLPLWALTLEAALILLFFFFTYYDASLEDQKGLVASYQVCQDLTVMAVLGLGFFTSNLRRNSWSSVAFNLFLLALGVQWAILLDGFLSQFSPGKVAIKLFSIRLATRSTMSMLISMNAVLGKVNLVQLVVMELVELTVFGTMRIVINNIFKIDYGMNMMHIHVFAAYFGLTVAWCLPKPLPKGTEDKYQTTTSPSLFAMLGTLFLWMFWPTFNSALLLNPIERKNAVFSTYYALAVSAVTAISVSSLAHPGGKINMTYMHNAALAGGVALSASCHVIHSPWIAMVLGLVAGLISIGGAKCLPVCFNRVLGIHESHSVHYTFGLPALLGEITYIVLMALRVVWASSNMIGFQVLLSTGTLSLAMAMSITSGLLTGLLLNLKIWKGPHVAKYFDDQAFWEFPHLAVGF.

Helical transmembrane passes span 12-32 (CLPL…FFFT), 44-64 (LVAS…GLGF), 77-97 (VAFN…LDGF), 125-145 (ISMN…MELV), 172-192 (IHVF…KPLP), 203-223 (TSPS…WPTF), 238-258 (VFST…VSSL), 265-285 (INMT…SASC), 287-307 (VIHS…ISIG), 331-351 (TFGL…ALRV), and 358-378 (MIGF…AMSI).

This sequence belongs to the ammonium transporter (TC 2.A.49) family. Rh subfamily.

It localises to the membrane. Its function is as follows. May be part of an oligomeric complex which is likely to have a transport or channel function in the erythrocyte membrane. The sequence is that of RH-like protein from Macaca mulatta (Rhesus macaque).